The following is a 60-amino-acid chain: Cytotoxin SP15d (60 aa).

4 disulfides stabilise this stretch: Cys-3–Cys-21, Cys-14–Cys-38, Cys-42–Cys-53, and Cys-54–Cys-59.

The protein belongs to the three-finger toxin family. Short-chain subfamily. Type IA cytotoxin sub-subfamily. Monomer in solution; Homodimer and oligomer in the presence of negatively charged lipids forming a pore with a size ranging between 20 and 30 Angstroms. As to expression, expressed by the venom gland.

The protein resides in the secreted. It localises to the target cell membrane. In terms of biological role, shows cytolytic activity on many different cells by forming pore in lipid membranes. In vivo, increases heart rate or kills the animal by cardiac arrest. In addition, it binds to heparin with high affinity, interacts with Kv channel-interacting protein 1 (KCNIP1) in a calcium-independent manner, and binds to integrin alpha-V/beta-3 (ITGAV/ITGB3) with moderate affinity. In Naja atra (Chinese cobra), this protein is Cytotoxin SP15d.